We begin with the raw amino-acid sequence, 257 residues long: Zinc transporter ZupT (257 aa).

Helical transmembrane passes span 5–25, 32–52, 61–81, 109–129, 137–157, 171–191, 195–215, and 236–256; these read LILTLLAGAATFIGAFLGVLG, VLAFSLGFAAGIMLLISLMEM, GMSPVLGYGMFIIGLLGYFGL, AILLTLGISLHNFPEGIATFV, LGFGIALAVALHNIPEGLAVA, IFWAGISGMAEILGGVLAWLI, LVSPIVMAAIMAAVAGIMVAL, and GVLCGMSIMGLSLVILQTIGI. Fe(2+)-binding residues include Asn120 and Glu123. 2 residues coordinate Zn(2+): Glu123 and His148. Fe(2+) contacts are provided by Asn149, Glu152, and Glu181. Glu152 is a binding site for Zn(2+).

It belongs to the ZIP transporter (TC 2.A.5) family. ZupT subfamily.

It is found in the cell inner membrane. It catalyses the reaction Zn(2+)(in) = Zn(2+)(out). Mediates zinc uptake. May also transport other divalent cations. The chain is Zinc transporter ZupT from Salmonella heidelberg (strain SL476).